A 228-amino-acid polypeptide reads, in one-letter code: Ribose-5-phosphate isomerase A (228 aa).

Residues 27–30 (TGTT), 86–89 (DGAD), and 100–103 (KGMG) contribute to the substrate site. Glutamate 109 (proton acceptor) is an active-site residue. Lysine 127 is a binding site for substrate.

Belongs to the ribose 5-phosphate isomerase family. Homodimer.

The enzyme catalyses aldehydo-D-ribose 5-phosphate = D-ribulose 5-phosphate. It functions in the pathway carbohydrate degradation; pentose phosphate pathway; D-ribose 5-phosphate from D-ribulose 5-phosphate (non-oxidative stage): step 1/1. Its function is as follows. Catalyzes the reversible conversion of ribose-5-phosphate to ribulose 5-phosphate. This is Ribose-5-phosphate isomerase A from Borreliella afzelii (strain PKo) (Borrelia afzelii).